Here is a 353-residue protein sequence, read N- to C-terminus: Phosphate acyltransferase (353 aa).

It belongs to the PlsX family. As to quaternary structure, homodimer. Probably interacts with PlsY.

The protein resides in the cytoplasm. The enzyme catalyses a fatty acyl-[ACP] + phosphate = an acyl phosphate + holo-[ACP]. The protein operates within lipid metabolism; phospholipid metabolism. In terms of biological role, catalyzes the reversible formation of acyl-phosphate (acyl-PO(4)) from acyl-[acyl-carrier-protein] (acyl-ACP). This enzyme utilizes acyl-ACP as fatty acyl donor, but not acyl-CoA. The sequence is that of Phosphate acyltransferase from Myxococcus xanthus (strain DK1622).